The following is a 556-amino-acid chain: tRNA (guanine(37)-N(1))-methyltransferase (556 aa).

Residues 1 to 30 constitute a mitochondrion transit peptide; sequence MIITTKALTVLPHSGLRTTHRSLLARLRHY. S-adenosyl-L-methionine is bound by residues His-249, 287–288, 315–316, and Asn-346; these read DL and DA. Disordered stretches follow at residues 444–465 and 524–556; these read QHEE…KMKD and KKAA…EMQM. Composition is skewed to basic and acidic residues over residues 454–465 and 540–549; these read EEAKRPSNKMKD and SKPDTKKIEA.

This sequence belongs to the class I-like SAM-binding methyltransferase superfamily. TRM5/TYW2 family. Monomer.

The protein localises to the mitochondrion matrix. It is found in the nucleus. Its subcellular location is the cytoplasm. It carries out the reaction guanosine(37) in tRNA + S-adenosyl-L-methionine = N(1)-methylguanosine(37) in tRNA + S-adenosyl-L-homocysteine + H(+). Its function is as follows. Specifically methylates the N1 position of guanosine-37 in various cytoplasmic and mitochondrial tRNAs. Methylation is not dependent on the nature of the nucleoside 5' of the target nucleoside. This is the first step in the biosynthesis of wybutosine (yW), a modified base adjacent to the anticodon of tRNAs and required for accurate decoding. The protein is tRNA (guanine(37)-N(1))-methyltransferase of Anopheles gambiae (African malaria mosquito).